A 348-amino-acid polypeptide reads, in one-letter code: Protein DMR6-LIKE OXYGENASE 2 (348 aa).

Residues 194 to 294 (KHGQHMAINY…RISIPTFYCP (101 aa)) enclose the Fe2OG dioxygenase domain. Residues His219, Asp221, and His275 each coordinate Fe cation. Arg285 contacts 2-oxoglutarate.

It belongs to the iron/ascorbate-dependent oxidoreductase family. The cofactor is Fe(2+).

It catalyses the reaction salicylate + NADH + O2 + H(+) = 2,3-dihydroxybenzoate + NAD(+) + H2O. In terms of biological role, converts salicylic acid (SA) to 2,3-dihydroxybenzoic acid (2,3-DHBA). Negative regulator of defense against Hyaloperonospora arabidopsidis. (Microbial infection) Confers susceptibility to the downy mildew pathogen Hyaloperonospora arabidopsidis. This chain is Protein DMR6-LIKE OXYGENASE 2, found in Arabidopsis thaliana (Mouse-ear cress).